Consider the following 132-residue polypeptide: Small ribosomal subunit protein uS12 (132 aa).

Asp-89 carries the 3-methylthioaspartic acid modification. The tract at residues Leu-102–Lys-132 is disordered. Over residues Gly-118–Lys-132 the composition is skewed to low complexity.

Belongs to the universal ribosomal protein uS12 family. In terms of assembly, part of the 30S ribosomal subunit. Contacts proteins S8 and S17. May interact with IF1 in the 30S initiation complex.

With S4 and S5 plays an important role in translational accuracy. Its function is as follows. Interacts with and stabilizes bases of the 16S rRNA that are involved in tRNA selection in the A site and with the mRNA backbone. Located at the interface of the 30S and 50S subunits, it traverses the body of the 30S subunit contacting proteins on the other side and probably holding the rRNA structure together. The combined cluster of proteins S8, S12 and S17 appears to hold together the shoulder and platform of the 30S subunit. The polypeptide is Small ribosomal subunit protein uS12 (Chlorobaculum tepidum (strain ATCC 49652 / DSM 12025 / NBRC 103806 / TLS) (Chlorobium tepidum)).